The chain runs to 361 residues: D-alanine--D-alanine ligase (361 aa).

Residues 144 to 350 (KLCVSEAGIA…FPELCDRLLQ (207 aa)) form the ATP-grasp domain. 177–232 (PETLIYPVFVKPAHLGSSVGISKVSVQGELPEALAHACNLDTKVLIEQAMHGKEIE) is an ATP binding site. Mg(2+)-binding residues include D303, E317, and N319.

This sequence belongs to the D-alanine--D-alanine ligase family. The cofactor is Mg(2+). Mn(2+) serves as cofactor.

Its subcellular location is the cytoplasm. It carries out the reaction 2 D-alanine + ATP = D-alanyl-D-alanine + ADP + phosphate + H(+). The protein operates within cell wall biogenesis; peptidoglycan biosynthesis. Functionally, cell wall formation. This Chlorobium phaeovibrioides (strain DSM 265 / 1930) (Prosthecochloris vibrioformis (strain DSM 265)) protein is D-alanine--D-alanine ligase.